The sequence spans 325 residues: ATP phosphoribosyltransferase (325 aa).

Belongs to the ATP phosphoribosyltransferase family. Long subfamily. It depends on Mg(2+) as a cofactor.

It is found in the cytoplasm. The catalysed reaction is 1-(5-phospho-beta-D-ribosyl)-ATP + diphosphate = 5-phospho-alpha-D-ribose 1-diphosphate + ATP. Its pathway is amino-acid biosynthesis; L-histidine biosynthesis; L-histidine from 5-phospho-alpha-D-ribose 1-diphosphate: step 1/9. Feedback inhibited by histidine. Functionally, catalyzes the condensation of ATP and 5-phosphoribose 1-diphosphate to form N'-(5'-phosphoribosyl)-ATP (PR-ATP). Has a crucial role in the pathway because the rate of histidine biosynthesis seems to be controlled primarily by regulation of HisG enzymatic activity. In Rhodopseudomonas palustris (strain BisA53), this protein is ATP phosphoribosyltransferase.